The primary structure comprises 56 residues: Large ribosomal subunit protein bL32 (56 aa).

The segment covering 1 to 16 (MAVQKSKKSRSMRGMR) has biased composition (basic residues). Residues 1 to 33 (MAVQKSKKSRSMRGMRRSHDALTTSAVSVDATS) form a disordered region. A compositionally biased stretch (polar residues) spans 21-33 (ALTTSAVSVDATS).

The protein belongs to the bacterial ribosomal protein bL32 family.

This is Large ribosomal subunit protein bL32 from Aliivibrio fischeri (strain ATCC 700601 / ES114) (Vibrio fischeri).